The chain runs to 141 residues: Cholinesterase (141 aa).

N39 is a glycosylation site (N-linked (GlcNAc...) asparagine). Position 49-50 (49-50 (GS)) interacts with substrate. S131 functions as the Acyl-ester intermediate in the catalytic mechanism. A Phosphoserine modification is found at S131.

This sequence belongs to the type-B carboxylesterase/lipase family. As to quaternary structure, homotetramer; disulfide-linked. Dimer of dimers. As to expression, present in most cells except erythrocytes.

Its subcellular location is the secreted. It carries out the reaction an acylcholine + H2O = a carboxylate + choline + H(+). Functionally, esterase with broad substrate specificity. Contributes to the inactivation of the neurotransmitter acetylcholine. Can degrade neurotoxic organophosphate esters. This chain is Cholinesterase (BCHE), found in Ovis aries (Sheep).